The primary structure comprises 815 residues: SNF1 protein kinase subunit beta-1 (815 aa).

A compositionally biased stretch (polar residues) spans 1 to 11 (MGNSPSTQDPS). 2 disordered regions span residues 1–88 (MGNS…TIDK) and 117–146 (SDDH…TVKR). The N-myristoyl glycine moiety is linked to residue glycine 2. The span at 12 to 31 (HSTKKEHGHHFHDAFNKDRQ) shows a compositional bias: basic and acidic residues. A compositionally biased stretch (polar residues) spans 32-42 (GSITSQLFNNR). Serine 33 carries the phosphoserine modification. Composition is skewed to basic and acidic residues over residues 72 to 88 (PSTD…TIDK) and 117 to 129 (SDDH…EEQV). Serine 181, serine 198, serine 200, serine 206, serine 209, and serine 220 each carry phosphoserine. Disordered stretches follow at residues 311–335 (HANN…NDDF) and 362–389 (KHHN…FASL). Residues 313 to 326 (NNNGNIENNTRNKG) show a composition bias toward low complexity. Position 331 is a phosphoserine (serine 331). Basic residues predominate over residues 363-376 (HHNKTKKAQNKKIR). The span at 377–389 (SVSNSRRSSFASL) shows a compositional bias: low complexity. The tract at residues 473 to 716 (VSTDIASALK…LQQGGNIDAE (244 aa)) is kinase-interacting sequence (KIS); required for interaction with SNF1. A phosphoserine mark is found at serine 494 and serine 497. Residues 581 to 616 (EPTLDEELPKRPELKRFPSSSRKSSYYSAKGVERPS) form a disordered region. Residues 587-596 (ELPKRPELKR) show a composition bias toward basic and acidic residues. Residues 599-608 (SSSRKSSYYS) show a composition bias toward low complexity. Phosphoserine is present on serine 643. Residues 724–804 (SRYPVPDLPI…FITQVVYAPC (81 aa)) are association with SNF1 kinase complex (ASC) domain; required for interaction with SNF4.

Belongs to the 5'-AMP-activated protein kinase beta subunit family. Component of the SNF1 kinase complex, a heterotrimeric complex composed of the catalytic alpha subunit SNF1, one of the three related beta subunits SIP1, SIP2 or GAL83, and the regulatory gamma subunit SNF4. The beta subunit serves as a bridge between the catalytic and the regulatory subunit. Interacts (via KIS domain) with SNF1. Interacts (via ASC domain) with SNF4. Phosphorylated by SNF1 in vitro.

It localises to the cytoplasm. The protein localises to the vacuole membrane. Beta subunit of the SNF1 kinase complex, which is required for transcriptional, metabolic, and developmental adaptations in response to glucose limitation. Has a structural role, mediating heterotrimer formation, and a regulatory role, defining carbon source-regulated subcellular location and substrate specificity of the SNF1 kinase complex. Promotes the PKA-regulated relocalization of the SNF1 kinase complex to the vacuolar membrane in response to various types of carbon stress. In Saccharomyces cerevisiae (strain ATCC 204508 / S288c) (Baker's yeast), this protein is SNF1 protein kinase subunit beta-1 (SIP1).